The primary structure comprises 348 residues: Phosphate acyltransferase (348 aa).

This sequence belongs to the PlsX family. In terms of assembly, homodimer. Probably interacts with PlsY.

It is found in the cytoplasm. The enzyme catalyses a fatty acyl-[ACP] + phosphate = an acyl phosphate + holo-[ACP]. The protein operates within lipid metabolism; phospholipid metabolism. In terms of biological role, catalyzes the reversible formation of acyl-phosphate (acyl-PO(4)) from acyl-[acyl-carrier-protein] (acyl-ACP). This enzyme utilizes acyl-ACP as fatty acyl donor, but not acyl-CoA. In Rhizorhabdus wittichii (strain DSM 6014 / CCUG 31198 / JCM 15750 / NBRC 105917 / EY 4224 / RW1) (Sphingomonas wittichii), this protein is Phosphate acyltransferase.